Reading from the N-terminus, the 309-residue chain is Malate dehydrogenase (309 aa).

Residues 10–15 (GAGNVG) and Asp34 contribute to the NAD(+) site. Substrate-binding residues include Arg83 and Arg89. Residues Asn96 and 119–121 (VSN) each bind NAD(+). Positions 121 and 152 each coordinate substrate. Residue His176 is the Proton acceptor of the active site.

Belongs to the LDH/MDH superfamily. MDH type 3 family.

It catalyses the reaction (S)-malate + NAD(+) = oxaloacetate + NADH + H(+). Catalyzes the reversible oxidation of malate to oxaloacetate. This chain is Malate dehydrogenase, found in Heliobacterium modesticaldum (strain ATCC 51547 / Ice1).